Reading from the N-terminus, the 229-residue chain is Cytidylate kinase (229 aa).

Position 12–20 (12–20 (GPSGSGKGT)) interacts with ATP.

It belongs to the cytidylate kinase family. Type 1 subfamily.

It localises to the cytoplasm. The catalysed reaction is CMP + ATP = CDP + ADP. It catalyses the reaction dCMP + ATP = dCDP + ADP. The protein is Cytidylate kinase of Pseudomonas fluorescens (strain SBW25).